Consider the following 132-residue polypeptide: Transcription antitermination protein NusB (132 aa).

This sequence belongs to the NusB family.

Functionally, involved in transcription antitermination. Required for transcription of ribosomal RNA (rRNA) genes. Binds specifically to the boxA antiterminator sequence of the ribosomal RNA (rrn) operons. This Campylobacter jejuni subsp. jejuni serotype O:2 (strain ATCC 700819 / NCTC 11168) protein is Transcription antitermination protein NusB.